The sequence spans 307 residues: Atrochrysone carboxyl ACP thioesterase (307 aa).

4 residues coordinate Zn(2+): His-104, His-106, Asp-108, and His-109. Asp-108 (proton donor/acceptor) is an active-site residue.

The protein belongs to the metallo-beta-lactamase superfamily. Zn(2+) is required as a cofactor.

The enzyme catalyses atrochrysone carboxyl-[ACP] + H2O = atrochrysone carboxylate + holo-[ACP] + H(+). It functions in the pathway secondary metabolite biosynthesis. Atrochrysone carboxyl ACP thioesterase; part of the gene cluster that mediates the biosynthesis of monodictyphenone, a prenyl xanthone derivative. The pathway begins with the synthesis of atrochrysone thioester by the polyketide synthase (PKS) mdpG. The atrochrysone carboxyl ACP thioesterase mdpF then breaks the thioester bond and releases the atrochrysone carboxylic acid from mdpG. The atrochrysone carboxylic acid is then converted to atrochrysone which is further transformed into emodin anthrone. The next step is performed by the anthrone oxygenase mdpH that catalyzes the oxidation of emodinanthrone to emodin. Emodin is further modified to yield monodictyphenone via several steps involving mdpB, mdpC mdpJ, mdpK and mdpL. The short chain dehydrogenase mdpC converts the tautomers of emodin hydroquinone into the 3-hydroxy-3,4-dihydroan-thracen-1(2H)-one derivative. These enzymes with xptA, xptB and xptC are also proposed to be involved in the synthesis of shamixanthone from emodin. Especially, direct reduction of emodin by the short chain dehydrogenase mdpC followed by dehydration catalyzed by the scytalone dehydratase-like protein mdpB gives loss of oxygen and formation of chrysophanol intermediate in two simple steps. This Emericella nidulans (strain FGSC A4 / ATCC 38163 / CBS 112.46 / NRRL 194 / M139) (Aspergillus nidulans) protein is Atrochrysone carboxyl ACP thioesterase.